The sequence spans 682 residues: Potassium-transporting ATPase ATP-binding subunit (682 aa).

A run of 4 helical transmembrane segments spans residues 34 to 54, 62 to 82, 219 to 239, and 254 to 274; these read PVMFIVWIGSLLTTCISIAMA, ALFSAAISGWLWVTVLFANFA, IALTILLIALTIVFLLATATL, and VLVALLVCLIPTTIGGLLSAI. Aspartate 307 functions as the 4-aspartylphosphate intermediate in the catalytic mechanism. ATP contacts are provided by residues aspartate 344, glutamate 348, 377–384, and lysine 395; that span reads FTAQSRMS. Aspartate 518 and aspartate 522 together coordinate Mg(2+). 3 helical membrane passes run 588–608, 616–636, and 656–676; these read FAIIPAAFAATYPQLNALNIM, AILSAVIFNALIIVFLIPLAL, and IYGLGGLLVPFIGIKVIDLLL.

The protein belongs to the cation transport ATPase (P-type) (TC 3.A.3) family. Type IA subfamily. In terms of assembly, the system is composed of three essential subunits: KdpA, KdpB and KdpC.

It is found in the cell inner membrane. The enzyme catalyses K(+)(out) + ATP + H2O = K(+)(in) + ADP + phosphate + H(+). Its function is as follows. Part of the high-affinity ATP-driven potassium transport (or Kdp) system, which catalyzes the hydrolysis of ATP coupled with the electrogenic transport of potassium into the cytoplasm. This subunit is responsible for energy coupling to the transport system and for the release of the potassium ions to the cytoplasm. The sequence is that of Potassium-transporting ATPase ATP-binding subunit from Shigella sonnei (strain Ss046).